Reading from the N-terminus, the 169-residue chain is Shikimate kinase (169 aa).

12-17 lines the ATP pocket; sequence GAGKST. Residue Ser16 coordinates Mg(2+). Asp34, Arg58, and Gly80 together coordinate substrate. An ATP-binding site is contributed by Arg117. A substrate-binding site is contributed by Arg136.

It belongs to the shikimate kinase family. Monomer. Requires Mg(2+) as cofactor.

The protein localises to the cytoplasm. The catalysed reaction is shikimate + ATP = 3-phosphoshikimate + ADP + H(+). Its pathway is metabolic intermediate biosynthesis; chorismate biosynthesis; chorismate from D-erythrose 4-phosphate and phosphoenolpyruvate: step 5/7. In terms of biological role, catalyzes the specific phosphorylation of the 3-hydroxyl group of shikimic acid using ATP as a cosubstrate. In Rhodococcus erythropolis (strain PR4 / NBRC 100887), this protein is Shikimate kinase.